Consider the following 491-residue polypeptide: UDP-N-acetylmuramate--L-alanine ligase (491 aa).

ATP is bound at residue glycine 126–threonine 132.

This sequence belongs to the MurCDEF family.

It localises to the cytoplasm. The catalysed reaction is UDP-N-acetyl-alpha-D-muramate + L-alanine + ATP = UDP-N-acetyl-alpha-D-muramoyl-L-alanine + ADP + phosphate + H(+). It functions in the pathway cell wall biogenesis; peptidoglycan biosynthesis. Its function is as follows. Cell wall formation. This is UDP-N-acetylmuramate--L-alanine ligase from Salmonella paratyphi C (strain RKS4594).